The sequence spans 215 residues: Probable nicotinate-nucleotide adenylyltransferase (215 aa).

This sequence belongs to the NadD family.

It catalyses the reaction nicotinate beta-D-ribonucleotide + ATP + H(+) = deamido-NAD(+) + diphosphate. It functions in the pathway cofactor biosynthesis; NAD(+) biosynthesis; deamido-NAD(+) from nicotinate D-ribonucleotide: step 1/1. Its function is as follows. Catalyzes the reversible adenylation of nicotinate mononucleotide (NaMN) to nicotinic acid adenine dinucleotide (NaAD). This Shewanella sp. (strain W3-18-1) protein is Probable nicotinate-nucleotide adenylyltransferase.